A 1367-amino-acid chain; its full sequence is Probable serine/threonine-protein kinase pkgA (1367 aa).

4 disordered regions span residues 140-164 (IDEN…NKTI), 264-429 (KNGK…LLSR), 456-556 (PTPL…SRKP), and 771-792 (PREE…SDPV). Positions 143–162 (NNNNNNNNNNNNNNNNNKNK) are enriched in low complexity. Pro residues predominate over residues 271–282 (IKRPSPPLPPPQ). The span at 287-326 (EQQKEQKEQQKEQQKEQQKEQQKEQEQKQQEPQKYVKFEI) shows a compositional bias: basic and acidic residues. The span at 340-381 (ISSSNISNEISKQQQQQQQQQQQQQQQQQQQQQQQQQQQQQQ) shows a compositional bias: low complexity. Residues 399–421 (ANNNILTTPLSSQPTQSLETPST) show a composition bias toward polar residues. Acidic residues predominate over residues 506–517 (GEDEEEDEDDDN). Residues 531-544 (LKNKRPFKKTHVHH) show a composition bias toward basic residues. Residues 810–1236 (FEFIKPITKG…AEEIKSHPFF (427 aa)) enclose the Protein kinase domain. Residues 816-824 (ITKGGYGKV) and Lys-839 each bind ATP. The Proton acceptor role is filled by Asp-933. 3 disordered regions span residues 971-1034 (FSPT…PSNT), 1084-1134 (FIPP…HNIH), and 1288-1312 (QNQN…TATA). Positions 979-1015 (NNQSSSSSSVSNIGGSNTIGSNISSTNNNNNNNNTTG) are enriched in low complexity. Residues 1025–1034 (NTETPIPSNT) are compositionally biased toward polar residues. Low complexity-rich tracts occupy residues 1092–1125 (QQPI…QQTT) and 1294–1312 (SSTI…TATA). The AGC-kinase C-terminal domain occupies 1237 to 1347 (KSINWKTILT…VNFQSLLELN (111 aa)).

It belongs to the protein kinase superfamily. AGC Ser/Thr protein kinase family.

It carries out the reaction L-seryl-[protein] + ATP = O-phospho-L-seryl-[protein] + ADP + H(+). The enzyme catalyses L-threonyl-[protein] + ATP = O-phospho-L-threonyl-[protein] + ADP + H(+). This chain is Probable serine/threonine-protein kinase pkgA (pkgA), found in Dictyostelium discoideum (Social amoeba).